Consider the following 130-residue polypeptide: MIGNWNYGTGRRKTSVARVFIKKGTGKIVVNGKPVDEFFARETGRMVVRQPLALTGHLESFDIKVNVIGGGETGQAGAVRHGITRALIDYDATLKPALSQAGFVTRDAREVERKKVGLRKARRRKQFSKR.

This sequence belongs to the universal ribosomal protein uS9 family.

This chain is Small ribosomal subunit protein uS9, found in Bordetella avium (strain 197N).